The sequence spans 89 residues: Small membrane A-kinase anchor protein (89 aa).

The segment at 1 to 29 (MGCMKSKRRDPTQNSDSSEKVDGKPGKHG) is disordered. The N-myristoyl glycine moiety is linked to residue Gly-2. A compositionally biased stretch (basic and acidic residues) spans 17 to 29 (SSEKVDGKPGKHG).

The protein belongs to the small membrane AKAP family. In terms of processing, may be palmitoylated at Cys-3.

The protein localises to the cell membrane. Functionally, binds to type I regulatory subunits of protein kinase A and may anchor/target them to the plasma membrane. This is Small membrane A-kinase anchor protein from Danio rerio (Zebrafish).